Reading from the N-terminus, the 665-residue chain is MADVLSRFNSGKLWDFKGGIHPPEMKSQSNSQPLRHLPLGTDFYIPLKQHLGTTGNLLIKEGDYVLKGQALTKGDGLRMLPVHAPTSGTIKSIKPYVATHPSGLDEPTIHLQADGLDQWIERNPIDDFSTLSPEQLIHKIYQAGIAGLGGAVFPTAAKIQSAEQKVKLLIINGAECEPYITCDDRLMRERADEIIKGIRILRYILHPEKVVIAIEDNKPEAISAIRTALQGANDISIRVIPTKYPSGATKQLIYLLTGIEVPSGARSSSIGVLMQNVGTMFAIKRAIINDEPLIERVVTLTGNKIAEKGNYWVRLGTPISQILSDAGYQFDKHFPIFAGGPMMGLELPNLNAPVTKLVNCLLAPDYLEYAEPEAEQACIRCSSCSDACPVNLMPQQLYWFARSEDHKKSEEYALKDCIECGICAYVCPSHIPLIQYFRQEKAKIWQIKEKQKKSDEAKIRFEAKQARMEREEQERKARSQRAAQARREELAQTKGEDPVKAALERLKAKKANETEPTQIKTLTSEKGEVLPDNTDLMAQRKARRLARQQAASQVENQEQQTQPTDAKKAAVAAAIARAKAKKLAQTNSTSEAISNSQTAENEVEKTKSAVEKTEENSTALDPKKAAVAAAIARAKAKKLAQANSTSEAISNSQTAENEVEKQIVR.

4Fe-4S ferredoxin-type domains are found at residues 368-398 (EYAE…QQLY) and 408-437 (KSEE…IQYF). [4Fe-4S] cluster is bound by residues Cys378, Cys381, Cys384, Cys388, Cys417, Cys420, Cys423, and Cys427. Basic and acidic residues-rich tracts occupy residues 465 to 477 (QARM…ERKA) and 485 to 513 (ARRE…KANE). Disordered stretches follow at residues 465 to 568 (QARM…DAKK), 580 to 623 (AKKL…LDPK), and 637 to 665 (KKLA…QIVR). Polar residues-rich tracts occupy residues 554–564 (VENQEQQTQPT) and 585–600 (QTNS…QTAE). The span at 602–615 (EVEKTKSAVEKTEE) shows a compositional bias: basic and acidic residues. Polar residues predominate over residues 643–656 (NSTSEAISNSQTAE).

The protein belongs to the 4Fe4S bacterial-type ferredoxin family. RnfC subfamily. In terms of assembly, the complex is composed of six subunits: RnfA, RnfB, RnfC, RnfD, RnfE and RnfG. Requires [4Fe-4S] cluster as cofactor.

It localises to the cell inner membrane. In terms of biological role, part of a membrane-bound complex that couples electron transfer with translocation of ions across the membrane. The chain is Ion-translocating oxidoreductase complex subunit C from Haemophilus influenzae (strain 86-028NP).